We begin with the raw amino-acid sequence, 201 residues long: Small ribosomal subunit protein uS4c (201 aa).

The S4 RNA-binding domain occupies 89-157 (MRLDNILFRL…VQNYIASSDP (69 aa)).

It belongs to the universal ribosomal protein uS4 family. In terms of assembly, part of the 30S ribosomal subunit. Contacts protein S5. The interaction surface between S4 and S5 is involved in control of translational fidelity.

The protein resides in the plastid. It localises to the chloroplast. Its function is as follows. One of the primary rRNA binding proteins, it binds directly to 16S rRNA where it nucleates assembly of the body of the 30S subunit. With S5 and S12 plays an important role in translational accuracy. The protein is Small ribosomal subunit protein uS4c (rps4) of Hordeum vulgare (Barley).